The sequence spans 108 residues: ATP synthase subunit H, mitochondrial (108 aa).

A mitochondrion-targeting transit peptide spans 1–19; it reads MFTLRAASRRAFSTSIARR. Disordered regions lie at residues 40–60 and 75–108; these read AKDA…KPPV and APVD…GVAV. The span at 47 to 60 shows a compositional bias: low complexity; sequence VKPWSAPSAPKPPV. Residues 81 to 92 are compositionally biased toward polar residues; the sequence is GQTNSKSASPQA. Residues 93 to 108 are compositionally biased toward acidic residues; it reads NDEDWLAFEEEEGVAV.

As to quaternary structure, F-type ATP synthases have 2 components, the catalytic core F(1) and the membrane-embedded component F(0), linked together by a central stalk and a peripheral stalk. The central stalk, also called rotor shaft, is often seen as part of F(1). The peripheral stalk is seen as part of F(0). F(0) contains the membrane channel next to the rotor. F-type ATP synthases form dimers but each monomer functions independently in ATP generation. The dimer consists of 17 different polypeptides: ATP1 (subunit alpha, 3 molecules per monomer, part of F(1)), ATP2 (subunit beta, 3 copies per monomer, part of F(1)), ATP3 (subunit gamma, part of the central stalk), ATP4 (subunit b, part of the peripheral stalk), ATP5/OSCP (subunit 5/OSCP, part of the peripheral stalk), ATP6 (subunit a, part of the peripheral stalk), ATP7 (subunit d, part of the peripheral stalk), ATP8 (subunit 8, part of the peripheral stalk), OLI1 (subunit c, part of the rotor, 10 molecules per monomer), ATP14 (subunit H, part of the peripheral stalk), ATP15 (subunit epsilon, part of the central stalk), ATP16 (subunit delta, part of the central stalk), ATP17 (subunit f, part of the peripheral stalk), ATP18 (subunit i/j, part of the peripheral stalk), ATP19 (subunit k, dimer-specific, at interface between monomers), ATP20 (subunit g, at interface between monomers), TIM11 (subunit e, at interface between monomers).

It is found in the mitochondrion inner membrane. In terms of biological role, mitochondrial membrane ATP synthase (F(1)F(0) ATP synthase or Complex V) produces ATP from ADP in the presence of a proton gradient across the membrane which is generated by electron transport complexes of the respiratory chain. F-type ATP synthases consist of two structural domains, F(1) - containing the extramembraneous catalytic core, and F(0) - containing the membrane proton channel, linked together by a central stalk and a peripheral stalk. During catalysis, ATP synthesis in the catalytic domain of F(1) is coupled via a rotary mechanism of the central stalk subunits to proton translocation. Part of the peripheral stalk. This Yarrowia lipolytica (strain CLIB 122 / E 150) (Yeast) protein is ATP synthase subunit H, mitochondrial.